The chain runs to 944 residues: MVNYVLRKMLGTKNERELKRLRPLVARVSELEPRMKALSDADFPRLTAEWKQQVRNGRPLDDLMPEAFALVREAGVRALGMRHFDVQLIGGAVLHSGRIAEMKTGEGKTLVATLPSVLNALSGRGVHVVTVNDYLARRDSEWMGRLYRFCGLTTGVIVHGLTDRERQDAYHSDITYGQNNEFGFDYLRDNMKFRLQDYVQGELNFAIVDEVDSILIDEARTPLIISGPSDESSDLYYRVNQVIPSMIRDQDFTVDEKSRTIVMSDSGVEKMEKKLGVQNLYDPNAIETLHHVEQALRAHHLYRNEVDYVVKNGEVLIVDEFTGRLMPGRRWSDGLHQAVEAKEGVKIEAENQTLATISFQNYFRMYSKLAGMTGTADTEAEEFAKTYNLDVVVVPTNKKNVRKDSEDVVYKTEREKFGALCDEIETRHKKGQPVLVGTVSVAKSEVVSSLLKRRGVPHDVLNAKHHQREAEIVAQAGRKGSVTISTNMAGRGTDIILGGNAEMMAKHEVGPEPDLPMEGEAEESFLARKQEWARRLEETRERLRGQTATEHDEVVALGGLHIVGTERHESRRIDNQLRGRAGRQGDPGSSIFYLSLEDELMRIFGSERIQGLMSRMGMKEGEQIEHPWLTKAIEGAQKKVEGHNFDIRKNLLEYDDVMNQQRRSVYRLRRMVLGFGAGVPVVEYDEEPKTRKKTRREQVFTWGDQREHVLDLIEDLVFDMVGASCPNRLSDWNLDGLSSMVKEQFGVEMKFAPPSGKAADARREIEEQVYAVVEKAYRQKEEELGIGPDGEPVLRRYEQWLYLQAIDQQWKDHLLSMDHLRQGIGLRGYGQKDPKQEYKKEGYEMFVQMTWRVKSAVIGNLLRLQLVRQETAEEIEQKRLAAQRRAMQRITETHAAAAGDGEEKPRPKQETVVRTQPKVGRNDPCPCGSGKKYKKCHGATEAAV.

Residues Q87, 105-109, and D494 contribute to the ATP site; that span reads GEGKT. Residues 894–944 form a disordered region; the sequence is HAAAAGDGEEKPRPKQETVVRTQPKVGRNDPCPCGSGKKYKKCHGATEAAV. Over residues 901–911 the composition is skewed to basic and acidic residues; sequence GEEKPRPKQET. The Zn(2+) site is built by C925, C927, C936, and H937.

It belongs to the SecA family. In terms of assembly, monomer and homodimer. Part of the essential Sec protein translocation apparatus which comprises SecA, SecYEG and auxiliary proteins SecDF-YajC and YidC. Zn(2+) is required as a cofactor.

It localises to the cell inner membrane. The protein localises to the cytoplasm. The enzyme catalyses ATP + H2O + cellular proteinSide 1 = ADP + phosphate + cellular proteinSide 2.. In terms of biological role, part of the Sec protein translocase complex. Interacts with the SecYEG preprotein conducting channel. Has a central role in coupling the hydrolysis of ATP to the transfer of proteins into and across the cell membrane, serving as an ATP-driven molecular motor driving the stepwise translocation of polypeptide chains across the membrane. This Anaeromyxobacter sp. (strain Fw109-5) protein is Protein translocase subunit SecA.